Consider the following 382-residue polypeptide: D-galactonate dehydratase (382 aa).

Residue Asp-183 coordinates Mg(2+). His-185 (proton donor) is an active-site residue. 2 residues coordinate Mg(2+): Glu-209 and Glu-235. The Proton acceptor role is filled by His-285.

Belongs to the mandelate racemase/muconate lactonizing enzyme family. GalD subfamily. Requires Mg(2+) as cofactor.

It catalyses the reaction D-galactonate = 2-dehydro-3-deoxy-D-galactonate + H2O. It functions in the pathway carbohydrate acid metabolism; D-galactonate degradation; D-glyceraldehyde 3-phosphate and pyruvate from D-galactonate: step 1/3. Catalyzes the dehydration of D-galactonate to 2-keto-3-deoxy-D-galactonate. The protein is D-galactonate dehydratase of Salmonella gallinarum (strain 287/91 / NCTC 13346).